The primary structure comprises 38 residues: MTQTNPNEQSVELNRTSLYWGLLLIFVLAVLFSNYFFN.

A helical membrane pass occupies residues 17–37 (SLYWGLLLIFVLAVLFSNYFF).

The protein belongs to the PsbL family. As to quaternary structure, PSII is composed of 1 copy each of membrane proteins PsbA, PsbB, PsbC, PsbD, PsbE, PsbF, PsbH, PsbI, PsbJ, PsbK, PsbL, PsbM, PsbT, PsbX, PsbY, PsbZ, Psb30/Ycf12, at least 3 peripheral proteins of the oxygen-evolving complex and a large number of cofactors. It forms dimeric complexes.

It localises to the plastid. The protein resides in the chloroplast thylakoid membrane. Its function is as follows. One of the components of the core complex of photosystem II (PSII). PSII is a light-driven water:plastoquinone oxidoreductase that uses light energy to abstract electrons from H(2)O, generating O(2) and a proton gradient subsequently used for ATP formation. It consists of a core antenna complex that captures photons, and an electron transfer chain that converts photonic excitation into a charge separation. This subunit is found at the monomer-monomer interface and is required for correct PSII assembly and/or dimerization. The polypeptide is Photosystem II reaction center protein L (Gnetum gnemon (Spanish joint-fir)).